We begin with the raw amino-acid sequence, 196 residues long: ATP-dependent Clp protease proteolytic subunit (196 aa).

Catalysis depends on serine 96, which acts as the Nucleophile. Residue histidine 121 is part of the active site.

This sequence belongs to the peptidase S14 family. Fourteen ClpP subunits assemble into 2 heptameric rings which stack back to back to give a disk-like structure with a central cavity, resembling the structure of eukaryotic proteasomes.

Its subcellular location is the cytoplasm. The enzyme catalyses Hydrolysis of proteins to small peptides in the presence of ATP and magnesium. alpha-casein is the usual test substrate. In the absence of ATP, only oligopeptides shorter than five residues are hydrolyzed (such as succinyl-Leu-Tyr-|-NHMec, and Leu-Tyr-Leu-|-Tyr-Trp, in which cleavage of the -Tyr-|-Leu- and -Tyr-|-Trp bonds also occurs).. Functionally, cleaves peptides in various proteins in a process that requires ATP hydrolysis. Has a chymotrypsin-like activity. Plays a major role in the degradation of misfolded proteins. In Streptococcus suis (strain 98HAH33), this protein is ATP-dependent Clp protease proteolytic subunit.